The primary structure comprises 64 residues: Large ribosomal subunit protein bL33 (64 aa).

This sequence belongs to the bacterial ribosomal protein bL33 family.

This is Large ribosomal subunit protein bL33 from Gloeothece citriformis (strain PCC 7424) (Cyanothece sp. (strain PCC 7424)).